A 369-amino-acid chain; its full sequence is tRNA-specific 2-thiouridylase MnmA (369 aa).

ATP is bound by residues 7 to 14 and Met33; that span reads GISGGVDS. Residues 93–95 are interaction with target base in tRNA; it reads NPD. The active-site Nucleophile is the Cys98. Cys98 and Cys195 are oxidised to a cystine. Residue Gly123 participates in ATP binding. Residues 145–147 form an interaction with tRNA region; the sequence is KDQ. Cys195 acts as the Cysteine persulfide intermediate in catalysis. Residues 307-308 are interaction with tRNA; the sequence is RY.

It belongs to the MnmA/TRMU family. As to quaternary structure, interacts with TusE.

The protein resides in the cytoplasm. The catalysed reaction is S-sulfanyl-L-cysteinyl-[protein] + uridine(34) in tRNA + AH2 + ATP = 2-thiouridine(34) in tRNA + L-cysteinyl-[protein] + A + AMP + diphosphate + H(+). In terms of biological role, catalyzes the 2-thiolation of uridine at the wobble position (U34) of tRNA(Lys), tRNA(Glu) and tRNA(Gln), leading to the formation of s(2)U34, the first step of tRNA-mnm(5)s(2)U34 synthesis. Sulfur is provided by IscS, via a sulfur-relay system. Binds ATP and its substrate tRNAs. The sequence is that of tRNA-specific 2-thiouridylase MnmA from Blochmanniella floridana.